The primary structure comprises 312 residues: Zinc transporter ZitB (312 aa).

The next 5 membrane-spanning stretches (helical) occupy residues 21 to 41, 48 to 68, 90 to 110, 123 to 143, and 164 to 184; these read LLFA…GGIL, LADA…LLAV, AAFV…WEAI, LMMV…WILH, and LLGS…GWTP.

This sequence belongs to the cation diffusion facilitator (CDF) transporter (TC 2.A.4) family. SLC30A subfamily.

The protein resides in the cell inner membrane. In terms of biological role, involved in zinc efflux across the cytoplasmic membrane, thus reducing zinc accumulation in the cytoplasm and rendering bacteria more resistant to zinc. It may contribute to zinc homeostasis at low concentrations of zinc. The chain is Zinc transporter ZitB from Salmonella typhimurium (strain LT2 / SGSC1412 / ATCC 700720).